The sequence spans 876 residues: Dynein regulatory complex subunit 7 (876 aa).

2 coiled-coil regions span residues 1 to 33 (MEVL…ERVT) and 258 to 295 (KFEQ…AKPD). The segment at 1–40 (MEVLREKVEEEEEAEREEAAERAERTEKLERVTKSAEVSR) is disordered. Residues 17–40 (EEAAERAERTEKLERVTKSAEVSR) are compositionally biased toward basic and acidic residues. The segment at 385 to 412 (SLTEEDEEGLDDDDDDVEDLGKEEEDKS) is disordered. Residues 387-407 (TEEDEEGLDDDDDDVEDLGKE) show a composition bias toward acidic residues. Coiled-coil stretches lie at residues 679 to 710 (QLKN…EEEE) and 784 to 809 (QRLI…KKQQ).

It belongs to the DRC7 family. Component of the nexin-dynein regulatory complex (N-DRC). Interacts with TCTE1/DRC5. Interacts with DRC3 and GAS8/DRC4. As to expression, expressed in diplotene and pachytene spermytocytes, and in round and elongating spermatids (at protein level). Strongly expressed in spleen and testis, faintly expressed in kidney, ovary and thymus. Abundantly expressed in the testis and is weakly expressed in the brain, thymus, lung and ovary. Expressed in ciliated cells.

It is found in the cell projection. The protein resides in the cilium. The protein localises to the flagellum. It localises to the cytoplasm. Its subcellular location is the cytoskeleton. It is found in the cilium axoneme. The protein resides in the flagellum axoneme. In terms of biological role, component of the nexin-dynein regulatory complex (N-DRC) a key regulator of ciliary/flagellar motility which maintains the alignment and integrity of the distal axoneme and regulates microtubule sliding in motile axonemes. Essential for male fertility, sperm head morphogenesis and sperm flagellum formation. Not required for ciliogenesis in the brain and trachea. This chain is Dynein regulatory complex subunit 7 (Drc7), found in Mus musculus (Mouse).